Reading from the N-terminus, the 130-residue chain is Putative ankyrin repeat protein R886 (130 aa).

3 ANK repeats span residues 21-50, 54-83, and 85-113; these read NYDR…DITA, YGFT…SIIK, and DNLT…DIRY.

This is Putative ankyrin repeat protein R886 from Acanthamoeba polyphaga (Amoeba).